The primary structure comprises 98 residues: Large ribosomal subunit protein eL14 (98 aa).

The protein belongs to the eukaryotic ribosomal protein eL14 family.

This chain is Large ribosomal subunit protein eL14, found in Thermofilum pendens (strain DSM 2475 / Hrk 5).